The sequence spans 321 residues: Cytochrome f (321 aa).

The first 35 residues, Met-1–Val-35, serve as a signal peptide directing secretion. Heme contacts are provided by Tyr-38, Cys-58, Cys-61, and His-62. The helical transmembrane segment at Met-287 to Lys-307 threads the bilayer.

It belongs to the cytochrome f family. In terms of assembly, the 4 large subunits of the cytochrome b6-f complex are cytochrome b6, subunit IV (17 kDa polypeptide, petD), cytochrome f and the Rieske protein, while the 4 small subunits are PetG, PetL, PetM and PetN. The complex functions as a dimer. The cofactor is heme.

It localises to the plastid. Its subcellular location is the chloroplast thylakoid membrane. Its function is as follows. Component of the cytochrome b6-f complex, which mediates electron transfer between photosystem II (PSII) and photosystem I (PSI), cyclic electron flow around PSI, and state transitions. This chain is Cytochrome f, found in Chara vulgaris (Common stonewort).